A 289-amino-acid polypeptide reads, in one-letter code: Type II methyltransferase M.MjaIII (289 aa).

Residues tryptophan 9, lysine 13, aspartate 63, and aspartate 199 each contribute to the S-adenosyl-L-methionine site.

This sequence belongs to the N(4)/N(6)-methyltransferase family.

It catalyses the reaction a 2'-deoxyadenosine in DNA + S-adenosyl-L-methionine = an N(6)-methyl-2'-deoxyadenosine in DNA + S-adenosyl-L-homocysteine + H(+). Functionally, an alpha subtype methylase that recognizes the double-stranded sequence 5'-GATC-3', methylates A-2 on both strands, and protects the DNA from cleavage by the MjaIII endonuclease. This chain is Type II methyltransferase M.MjaIII (mjaIIIM), found in Methanocaldococcus jannaschii (strain ATCC 43067 / DSM 2661 / JAL-1 / JCM 10045 / NBRC 100440) (Methanococcus jannaschii).